We begin with the raw amino-acid sequence, 94 residues long: Mitochondrial import inner membrane translocase subunit Tim8 A (94 aa).

A Twin CX3C motif motif is present at residues 47–70; that stretch reads CWDKCIDRPGNKLDSRTESCLVSC. Disulfide bonds link Cys47/Cys70 and Cys51/Cys66.

Belongs to the small Tim family. In terms of assembly, heterohexamer; composed of 3 copies of TIMM8A and 3 copies of TIMM13, named soluble 70 kDa complex. Associates with the TIM22 complex, whose core is composed of TIMM22.

The protein resides in the mitochondrion inner membrane. Mitochondrial intermembrane chaperone that participates in the import and insertion of some multi-pass transmembrane proteins into the mitochondrial inner membrane. Also required for the transfer of beta-barrel precursors from the TOM complex to the sorting and assembly machinery (SAM complex) of the outer membrane. Acts as a chaperone-like protein that protects the hydrophobic precursors from aggregation and guide them through the mitochondrial intermembrane space. The TIMM8-TIMM13 complex mediates the import of some proteins while the predominant TIMM9-TIMM10 70 kDa complex mediates the import of much more proteins. This is Mitochondrial import inner membrane translocase subunit Tim8 A (timm8a) from Xenopus laevis (African clawed frog).